Consider the following 422-residue polypeptide: Vitamin D3 receptor B (422 aa).

A DNA-binding region (nuclear receptor) is located at residues 20–95 (PRICGVCGDK…IGMMKEFILT (76 aa)). The Zn(2+) site is built by cysteine 23, cysteine 26, cysteine 40, cysteine 43, cysteine 59, cysteine 65, cysteine 75, and cysteine 78. 2 NR C4-type zinc fingers span residues 23-43 (CGVCGDKATGFHFNAMTCEGC) and 59-78 (CPFNGSCTITKDNRRHCQAC). Positions 96–125 (DEEVQRKKELIQRRKDEEAHREAQKPRLSD) are hinge. Residues 106–128 (IQRRKDEEAHREAQKPRLSDEQR) form a disordered region. An NR LBD domain is found at 126–418 (EQRNIIDTLV…LTPLVLEVFG (293 aa)). Tyrosine 142 is a binding site for calcitriol. Residues 145–190 (SYSDFSRFRPPVREGPVTRSASRAASLHSLSDASSDSFSHSPESGD) form a disordered region. The segment covering 163 to 185 (RSASRAASLHSLSDASSDSFSHS) has biased composition (low complexity). Serine 234 lines the calcitriol pocket. Residues 243 to 261 (KMIPGFRELTAEDQIALLK) form an interaction with coactivator LXXLL motif region. Calcitriol is bound by residues arginine 271, serine 275, histidine 302, and histidine 392. The 9aaTAD motif lies at 411–419 (PLVLEVFGG).

This sequence belongs to the nuclear hormone receptor family. Homodimer in the absence of bound vitamin D3. Heterodimer with RXRA after vitamin D3 binding. Interacts with ncoa1 and possibly other coactivators, leading to a strong increase of transcription of target genes. As to expression, detected in embryo 24 to 48 hours after fertilization, and in intestinal bulb.

The protein resides in the nucleus. Its subcellular location is the cytoplasm. Functionally, nuclear receptor for calcitriol, the active form of vitamin D3 which mediates the action of this vitamin on cells. Enters the nucleus upon vitamin D3 binding where it forms heterodimers with the retinoid X receptor/RXR. The VDR-RXR heterodimers bind to specific response elements on DNA and activate the transcription of vitamin D3-responsive target genes. Recruited to promoters via its interaction with BAZ1B/WSTF which mediates the interaction with acetylated histones, an essential step for VDR-promoter association. Plays a central role in calcium homeostasis. The sequence is that of Vitamin D3 receptor B (vdrb) from Danio rerio (Zebrafish).